The chain runs to 96 residues: MF6 protein (96 aa).

This is MF6 protein from Myxoma virus (strain Uriarra) (MYXV).